The following is a 275-amino-acid chain: 3-methyl-2-oxobutanoate hydroxymethyltransferase (275 aa).

Residues Asp44 and Asp83 each contribute to the Mg(2+) site. Residues 44–45, Asp83, and Lys113 each bind 3-methyl-2-oxobutanoate; that span reads DS. Mg(2+) is bound at residue Glu115. Glu182 serves as the catalytic Proton acceptor.

The protein belongs to the PanB family. Homodecamer; pentamer of dimers. Mg(2+) is required as a cofactor.

The protein localises to the cytoplasm. The catalysed reaction is 3-methyl-2-oxobutanoate + (6R)-5,10-methylene-5,6,7,8-tetrahydrofolate + H2O = 2-dehydropantoate + (6S)-5,6,7,8-tetrahydrofolate. It participates in cofactor biosynthesis; (R)-pantothenate biosynthesis; (R)-pantoate from 3-methyl-2-oxobutanoate: step 1/2. Its function is as follows. Catalyzes the reversible reaction in which hydroxymethyl group from 5,10-methylenetetrahydrofolate is transferred onto alpha-ketoisovalerate to form ketopantoate. This chain is 3-methyl-2-oxobutanoate hydroxymethyltransferase, found in Clostridium beijerinckii (strain ATCC 51743 / NCIMB 8052) (Clostridium acetobutylicum).